The chain runs to 109 residues: Putative double-stranded DNA mimic protein YciU (109 aa).

Belongs to the putative dsDNA mimic protein family.

May act as a double-stranded DNA (dsDNA) mimic. Probably regulates the activity of a dsDNA-binding protein. The protein is Putative double-stranded DNA mimic protein YciU of Shigella boydii serotype 18 (strain CDC 3083-94 / BS512).